The chain runs to 346 residues: Sensor protein kinase GraS (346 aa).

A run of 2 helical transmembrane segments spans residues 18 to 38 (IFWILFLNILMLGISLIDYDF) and 43 to 63 (LFYIVSLNLSLTLIFLILTFF). Residues 126-332 (EFVHDIKTPV…TVKLIFPLQN (207 aa)) enclose the Histidine kinase domain.

Interacts with GraX.

The protein localises to the cell membrane. The catalysed reaction is ATP + protein L-histidine = ADP + protein N-phospho-L-histidine.. Member of the two-component regulatory system GraR/GraS involved in resistance against cationic antimicrobial peptides (CAMPs). Functions as a sensor protein kinase which phosphorylates GraR through the auxiliary protein GraX. In turn, GraR up-regulates many genes such as adhesins, exoproteins, transporters, toxins, and proteins involved in cell wall synthesis. Down-regulates the expression of many genes involved in RNA and amino acid synthesis or glycolysis. This chain is Sensor protein kinase GraS (graS), found in Staphylococcus aureus (strain MRSA252).